Here is a 563-residue protein sequence, read N- to C-terminus: Eukaryotic translation initiation factor 3 subunit D-1 (563 aa).

A disordered region spans residues 98–167; sequence VQKPPHQRGR…GPPPKMRESS (70 aa). Over residues 100-121 the composition is skewed to basic residues; that stretch reads KPPHQRGRFRNMRNSRSGRGRN. Thr128 bears the Phosphothreonine mark. Residues 291-305 form an RNA gate region; sequence EFDLLTVNESSVEPP.

It belongs to the eIF-3 subunit D family. As to quaternary structure, component of the eukaryotic translation initiation factor 3 (eIF-3) complex. The eIF-3 complex interacts with pix.

It localises to the cytoplasm. Its function is as follows. mRNA cap-binding component of the eukaryotic translation initiation factor 3 (eIF-3) complex, which is involved in protein synthesis of a specialized repertoire of mRNAs and, together with other initiation factors, stimulates binding of mRNA and methionyl-tRNAi to the 40S ribosome. The eIF-3 complex specifically targets and initiates translation of a subset of mRNAs involved in cell proliferation. In the eIF-3 complex, eif3d specifically recognizes and binds the 7-methylguanosine cap of a subset of mRNAs. This Drosophila grimshawi (Hawaiian fruit fly) protein is Eukaryotic translation initiation factor 3 subunit D-1.